A 548-amino-acid polypeptide reads, in one-letter code: Alpha-humulene synthase (548 aa).

Residues D302, D306, and E453 each contribute to the Mg(2+) site. The DDXXD motif signature appears at 302-306 (DDIYD).

Belongs to the terpene synthase family. As to expression, mostly expressed in rhizomes.

It catalyses the reaction (2E,6E)-farnesyl diphosphate = alpha-humulene + diphosphate. In terms of biological role, catalyzes the formation of alpha-humulene in the first step of zerumbone biosynthesis, a highly promising multi-anticancer agent. Also mediates formation of beta-caryophyllene at a much lower level. The polypeptide is Alpha-humulene synthase (ZSS1) (Zingiber zerumbet (Shampoo ginger)).